Reading from the N-terminus, the 302-residue chain is N(G),N(G)-dimethylarginine dimethylaminohydrolase (302 aa).

Asp-102, Arg-127, and Arg-172 together coordinate substrate. The Proton donor role is filled by His-201. Cys-295 (nucleophile) is an active-site residue.

Belongs to the DDAH family.

It catalyses the reaction N(omega),N(omega)-dimethyl-L-arginine + H2O = dimethylamine + L-citrulline. It carries out the reaction N(omega)-methyl-L-arginine + H2O = L-citrulline + methylamine. Hydrolyzes N(G),N(G)-dimethyl-L-arginine (ADMA) and N(G)-monomethyl-L-arginine (MMA). The sequence is that of N(G),N(G)-dimethylarginine dimethylaminohydrolase from Mycobacterium tuberculosis (strain ATCC 25618 / H37Rv).